The primary structure comprises 209 residues: Ribosomal RNA large subunit methyltransferase E (209 aa).

Positions 63, 65, 83, 99, and 124 each coordinate S-adenosyl-L-methionine. The active-site Proton acceptor is Lys164.

Belongs to the class I-like SAM-binding methyltransferase superfamily. RNA methyltransferase RlmE family.

The protein resides in the cytoplasm. The catalysed reaction is uridine(2552) in 23S rRNA + S-adenosyl-L-methionine = 2'-O-methyluridine(2552) in 23S rRNA + S-adenosyl-L-homocysteine + H(+). In terms of biological role, specifically methylates the uridine in position 2552 of 23S rRNA at the 2'-O position of the ribose in the fully assembled 50S ribosomal subunit. The sequence is that of Ribosomal RNA large subunit methyltransferase E from Shewanella frigidimarina (strain NCIMB 400).